A 595-amino-acid chain; its full sequence is NADH-quinone oxidoreductase subunit C/D (595 aa).

The tract at residues M1–E185 is NADH dehydrogenase I subunit C. Residues D209–R595 are NADH dehydrogenase I subunit D.

In the N-terminal section; belongs to the complex I 30 kDa subunit family. The protein in the C-terminal section; belongs to the complex I 49 kDa subunit family. As to quaternary structure, NDH-1 is composed of 13 different subunits. Subunits NuoB, CD, E, F, and G constitute the peripheral sector of the complex.

The protein resides in the cell inner membrane. The catalysed reaction is a quinone + NADH + 5 H(+)(in) = a quinol + NAD(+) + 4 H(+)(out). Its function is as follows. NDH-1 shuttles electrons from NADH, via FMN and iron-sulfur (Fe-S) centers, to quinones in the respiratory chain. The immediate electron acceptor for the enzyme in this species is believed to be ubiquinone. Couples the redox reaction to proton translocation (for every two electrons transferred, four hydrogen ions are translocated across the cytoplasmic membrane), and thus conserves the redox energy in a proton gradient. In Baumannia cicadellinicola subsp. Homalodisca coagulata, this protein is NADH-quinone oxidoreductase subunit C/D.